Here is a 197-residue protein sequence, read N- to C-terminus: ATP-dependent Clp protease proteolytic subunit 1 (197 aa).

Catalysis depends on Ser96, which acts as the Nucleophile. His121 is a catalytic residue.

The protein belongs to the peptidase S14 family. As to quaternary structure, fourteen ClpP subunits assemble into 2 heptameric rings which stack back to back to give a disk-like structure with a central cavity, resembling the structure of eukaryotic proteasomes.

It localises to the cytoplasm. It carries out the reaction Hydrolysis of proteins to small peptides in the presence of ATP and magnesium. alpha-casein is the usual test substrate. In the absence of ATP, only oligopeptides shorter than five residues are hydrolyzed (such as succinyl-Leu-Tyr-|-NHMec, and Leu-Tyr-Leu-|-Tyr-Trp, in which cleavage of the -Tyr-|-Leu- and -Tyr-|-Trp bonds also occurs).. Its function is as follows. Cleaves peptides in various proteins in a process that requires ATP hydrolysis. Has a chymotrypsin-like activity. Plays a major role in the degradation of misfolded proteins. This is ATP-dependent Clp protease proteolytic subunit 1 from Synechococcus sp. (strain ATCC 27144 / PCC 6301 / SAUG 1402/1) (Anacystis nidulans).